We begin with the raw amino-acid sequence, 565 residues long: Nephronectin (565 aa).

Residues 1-19 (MDFLLALVLVSSLYLQAAA) form the signal peptide. One can recognise an EGF-like 1 domain in the interval 52–87 (SWGQCQPVCQPRCKHGECIGPNKCKCHPGYAGKTCN). Cystine bridges form between cysteine 56–cysteine 69, cysteine 60–cysteine 75, cysteine 77–cysteine 86, cysteine 93–cysteine 104, cysteine 100–cysteine 113, and cysteine 115–cysteine 127. An EGF-like 2; calcium-binding domain is found at 89–128 (DLNECGLKPRPCKHRCMNTYGSYKCYCLNGYMLMPDGSCS). The EGF-like 3 domain maps to 132–168 (TCSMANCQYGCDVVKGQIRCQCPSPGLQLAPDGRTCV). The EGF-like 4; calcium-binding domain maps to 169 to 213 (DVDECATGRASCPRFRQCVNTFGSYICKCHKGFNLMYIGGKYQCH). Disulfide bonds link cysteine 173–cysteine 186, cysteine 180–cysteine 195, cysteine 197–cysteine 212, cysteine 218–cysteine 231, cysteine 225–cysteine 240, and cysteine 242–cysteine 253. The 41-residue stretch at 214–254 (DIDECSLGQYQCSSFARCYNIHGSYKCKCKEGYQGDGLTCV) folds into the EGF-like 5; calcium-binding domain. A disordered region spans residues 301-373 (YIPPIITNRP…PPGGITVDNR (73 aa)). Positions 304–316 (PIITNRPTSKPTT) are enriched in low complexity. Pro residues predominate over residues 317–349 (RPTPKPTPIPTPPPPPPLPTELRTPLPPTTPER). Residues 382–384 (RGD) carry the Integrin interaction motif. An MAM domain is found at 420 to 563 (HSCNFDHGLC…VSLKKGHCSE (144 aa)).

This sequence belongs to the nephronectin family. As to quaternary structure, homodimer and homotrimer.

The protein localises to the secreted. It is found in the extracellular space. It localises to the extracellular matrix. In terms of biological role, functional ligand of integrin alpha-8/beta-1 in kidney development. Regulates the expression of GDNF with integrin alpha-8/beta-1 which is essential for kidney development. May also play a role in the development and function of various tissues, regulating cell adhesion, spreading and survival through the binding of several integrins. In Pongo abelii (Sumatran orangutan), this protein is Nephronectin (NPNT).